Here is a 143-residue protein sequence, read N- to C-terminus: Putative nickel-responsive regulator (143 aa).

Ni(2+) is bound by residues His82, His97, His99, and Cys105.

This sequence belongs to the transcriptional regulatory CopG/NikR family. It depends on Ni(2+) as a cofactor.

Functionally, transcriptional regulator. The chain is Putative nickel-responsive regulator from Helicobacter hepaticus (strain ATCC 51449 / 3B1).